Consider the following 54-residue polypeptide: ComX pheromone (54 aa).

Residues 1–46 (MQEIVGYLVKNPEVLDEVMKGRASLLNIDKDQLKSIVDAFGGLQIY) constitute a propeptide that is removed on maturation. The 3'-geranyl-2',N2-cyclotryptophan moiety is linked to residue tryptophan 51.

Interacts directly with the sensor histidine kinase ComP and stimulates its activity. Trp-51 is modified by isoprenylation, probably by geranylation, which is essential for activity. Modified by the tryptophan prenyltransferase ComQ before export to the extracellular environment. The type of isoprenyl derivative differs among the different pherotypes and depends on ComX primary sequence.

The protein localises to the secreted. Part of a major quorum-sensing system that regulates the development of genetic competence. Acts through the activation of the two-component regulatory system ComP/ComA composed of a sensor histidine kinase, ComP, and a response regulator, ComA. The polypeptide is ComX pheromone (Bacillus mojavensis).